The sequence spans 629 residues: uncharacterized protein (629 aa).

In terms of domain architecture, ABC transporter 1 spans 4–255; that stretch reads LKAENLYKTY…KRAEREAQAE (252 aa). 36–43 serves as a coordination point for ATP; that stretch reads GPNGTGKS. A disordered region spans residues 284–304; sequence KARIDRVETLKEQTGPQSSGS. Residues 285-294 show a composition bias toward basic and acidic residues; sequence ARIDRVETLK. The span at 295–304 shows a compositional bias: polar residues; it reads EQTGPQSSGS. The ABC transporter 2 domain maps to 319–537; the sequence is IEAENVMIAY…EESKAKKAAP (219 aa). Residue 351–358 coordinates ATP; the sequence is GPNGIGKT. Positions 530–555 are disordered; sequence SKAKKAAPKPAAEEKTAEAEPKKKRK. Positions 540 to 550 are enriched in basic and acidic residues; sequence AAEEKTAEAEP. The stretch at 560 to 629 forms a coiled coil; it reads KDQLEWDGIE…LSLMIEELES (70 aa).

It belongs to the ABC transporter superfamily.

This is an uncharacterized protein from Bacillus subtilis (strain 168).